Reading from the N-terminus, the 347-residue chain is Phospho-N-acetylmuramoyl-pentapeptide-transferase (347 aa).

A run of 10 helical transmembrane segments spans residues 10 to 30 (SLVF…IFLG), 67 to 87 (AGGI…LPLG), 91 to 111 (TWLF…DDIV), 127 to 147 (FVLQ…IYKG), 164 to 184 (LGHS…AIVG), 195 to 215 (LDGL…VVAV), 220 to 240 (IPLA…SLAF), 250 to 270 (VFMG…CAVM), 275 to 295 (LLLI…ILQI), and 325 to 345 (VVKR…IAAL).

Belongs to the glycosyltransferase 4 family. MraY subfamily. It depends on Mg(2+) as a cofactor.

The protein resides in the cell inner membrane. It catalyses the reaction UDP-N-acetyl-alpha-D-muramoyl-L-alanyl-gamma-D-glutamyl-meso-2,6-diaminopimeloyl-D-alanyl-D-alanine + di-trans,octa-cis-undecaprenyl phosphate = di-trans,octa-cis-undecaprenyl diphospho-N-acetyl-alpha-D-muramoyl-L-alanyl-D-glutamyl-meso-2,6-diaminopimeloyl-D-alanyl-D-alanine + UMP. Its pathway is cell wall biogenesis; peptidoglycan biosynthesis. In terms of biological role, catalyzes the initial step of the lipid cycle reactions in the biosynthesis of the cell wall peptidoglycan: transfers peptidoglycan precursor phospho-MurNAc-pentapeptide from UDP-MurNAc-pentapeptide onto the lipid carrier undecaprenyl phosphate, yielding undecaprenyl-pyrophosphoryl-MurNAc-pentapeptide, known as lipid I. The protein is Phospho-N-acetylmuramoyl-pentapeptide-transferase of Chlamydia abortus (strain DSM 27085 / S26/3) (Chlamydophila abortus).